The primary structure comprises 397 residues: Serpin B10 (397 aa).

Positions 74-77 (KKRK) match the Nuclear localization signal motif.

Belongs to the serpin family. Ov-serpin subfamily.

Its subcellular location is the nucleus. It localises to the cytoplasm. In terms of biological role, protease inhibitor that may play a role in the regulation of protease activities during hematopoiesis and apoptosis induced by TNF. May regulate protease activities in the cytoplasm and in the nucleus. This chain is Serpin B10 (SERPINB10), found in Sorex araneus (Eurasian common shrew).